Consider the following 109-residue polypeptide: Spermidine export protein MdtI (109 aa).

Residues 1–5 lie on the Periplasmic side of the membrane; it reads MAQFE. Residues 6–26 traverse the membrane as a helical segment; sequence WVHAAWLALAIVLEIIANVFL. Topologically, residues 27 to 35 are cytoplasmic; sequence KFSDGFRRK. The helical transmembrane segment at 36-56 threads the bilayer; sequence IFGLLSLAAVLAAFSALSQAV. Topologically, residues 57-63 are periplasmic; the sequence is KGIDLSV. The chain crosses the membrane as a helical span at residues 64–84; the sequence is AYALWGGFGIAATLAAGWILF. The Cytoplasmic segment spans residues 85 to 87; that stretch reads GQR. The helical transmembrane segment at 88-108 threads the bilayer; sequence LNRKGWIGLVLLLAGMIMVKL. Residue Ala-109 is a topological domain, periplasmic.

The protein belongs to the drug/metabolite transporter (DMT) superfamily. Small multidrug resistance (SMR) (TC 2.A.7.1) family. MdtI subfamily. In terms of assembly, forms a complex with MdtJ.

Its subcellular location is the cell inner membrane. Catalyzes the excretion of spermidine. This is Spermidine export protein MdtI (mdtI) from Escherichia coli O6:H1 (strain CFT073 / ATCC 700928 / UPEC).